The primary structure comprises 84 residues: Small ribosomal subunit protein uS17 (84 aa).

This sequence belongs to the universal ribosomal protein uS17 family. In terms of assembly, part of the 30S ribosomal subunit.

In terms of biological role, one of the primary rRNA binding proteins, it binds specifically to the 5'-end of 16S ribosomal RNA. This is Small ribosomal subunit protein uS17 from Citrobacter koseri (strain ATCC BAA-895 / CDC 4225-83 / SGSC4696).